A 362-amino-acid chain; its full sequence is Heme A synthase (362 aa).

Transmembrane regions (helical) follow at residues 10-30 (LAAI…MVLV), 102-122 (VIGM…AVSG), 128-148 (LWLI…MVAS), 159-179 (VRLA…VWTL), and 198-218 (AWGL…VAGL). H262 is a binding site for heme. The next 3 helical transmembrane spans lie at 266-286 (AYTL…AGAG), 297-317 (LAAI…VVPI), and 318-338 (SLAL…VLQA). H323 is a heme binding site.

Belongs to the COX15/CtaA family. Type 2 subfamily. As to quaternary structure, interacts with CtaB. The cofactor is heme b.

It localises to the cell membrane. It carries out the reaction Fe(II)-heme o + 2 A + H2O = Fe(II)-heme a + 2 AH2. It participates in porphyrin-containing compound metabolism; heme A biosynthesis; heme A from heme O: step 1/1. Catalyzes the conversion of heme O to heme A by two successive hydroxylations of the methyl group at C8. The first hydroxylation forms heme I, the second hydroxylation results in an unstable dihydroxymethyl group, which spontaneously dehydrates, resulting in the formyl group of heme A. This Bradyrhizobium sp. (strain BTAi1 / ATCC BAA-1182) protein is Heme A synthase.